A 153-amino-acid polypeptide reads, in one-letter code: Large ribosomal subunit protein bL9 (153 aa).

The protein belongs to the bacterial ribosomal protein bL9 family.

Functionally, binds to the 23S rRNA. This Micrococcus luteus (strain ATCC 4698 / DSM 20030 / JCM 1464 / CCM 169 / CCUG 5858 / IAM 1056 / NBRC 3333 / NCIMB 9278 / NCTC 2665 / VKM Ac-2230) (Micrococcus lysodeikticus) protein is Large ribosomal subunit protein bL9.